Consider the following 87-residue polypeptide: Small ribosomal subunit protein bS18 (87 aa).

This sequence belongs to the bacterial ribosomal protein bS18 family. In terms of assembly, part of the 30S ribosomal subunit. Forms a tight heterodimer with protein bS6.

Functionally, binds as a heterodimer with protein bS6 to the central domain of the 16S rRNA, where it helps stabilize the platform of the 30S subunit. This is Small ribosomal subunit protein bS18 from Oleidesulfovibrio alaskensis (strain ATCC BAA-1058 / DSM 17464 / G20) (Desulfovibrio alaskensis).